The primary structure comprises 391 residues: Na(+)/H(+) antiporter NhaA (391 aa).

11 helical membrane passes run 14–34 (AGGI…NSPL), 59–79 (LLLW…GLEV), 95–115 (SLPT…YLFF), 124–144 (VGWA…MALL), 154–174 (VFLL…IALF), 177–197 (TDLS…LVAL), 213–233 (IILW…GVVI), 261–281 (FLIL…NVGF), 287–307 (PVPV…VLLF), 328–348 (IAPV…IASL), and 363–383 (IGIL…LSKV).

Belongs to the NhaA Na(+)/H(+) (TC 2.A.33) antiporter family.

Its subcellular location is the cell inner membrane. It carries out the reaction Na(+)(in) + 2 H(+)(out) = Na(+)(out) + 2 H(+)(in). Its function is as follows. Na(+)/H(+) antiporter that extrudes sodium in exchange for external protons. This chain is Na(+)/H(+) antiporter NhaA, found in Shewanella amazonensis (strain ATCC BAA-1098 / SB2B).